Consider the following 336-residue polypeptide: Glycerol-3-phosphate dehydrogenase [NAD(P)+] (336 aa).

4 residues coordinate NADPH: serine 11, tryptophan 12, arginine 32, and lysine 106. Sn-glycerol 3-phosphate is bound by residues lysine 106 and glycine 136. Alanine 140 is an NADPH binding site. 5 residues coordinate sn-glycerol 3-phosphate: lysine 191, aspartate 244, serine 254, arginine 255, and asparagine 256. Lysine 191 (proton acceptor) is an active-site residue. Residue arginine 255 participates in NADPH binding. NADPH contacts are provided by valine 279 and glutamate 281.

Belongs to the NAD-dependent glycerol-3-phosphate dehydrogenase family.

The protein resides in the cytoplasm. It carries out the reaction sn-glycerol 3-phosphate + NAD(+) = dihydroxyacetone phosphate + NADH + H(+). The enzyme catalyses sn-glycerol 3-phosphate + NADP(+) = dihydroxyacetone phosphate + NADPH + H(+). It participates in membrane lipid metabolism; glycerophospholipid metabolism. Catalyzes the reduction of the glycolytic intermediate dihydroxyacetone phosphate (DHAP) to sn-glycerol 3-phosphate (G3P), the key precursor for phospholipid synthesis. This Frankia casuarinae (strain DSM 45818 / CECT 9043 / HFP020203 / CcI3) protein is Glycerol-3-phosphate dehydrogenase [NAD(P)+].